The sequence spans 1384 residues: DNA-directed RNA polymerase subunit beta' (1384 aa).

Cys-81, Cys-83, Cys-96, and Cys-99 together coordinate Zn(2+). Positions 472, 474, and 476 each coordinate Mg(2+).

Belongs to the RNA polymerase beta' chain family. In terms of assembly, the RNAP catalytic core consists of 2 alpha, 1 beta, 1 beta' and 1 omega subunit. When a sigma factor is associated with the core the holoenzyme is formed, which can initiate transcription. It depends on Mg(2+) as a cofactor. The cofactor is Zn(2+).

The catalysed reaction is RNA(n) + a ribonucleoside 5'-triphosphate = RNA(n+1) + diphosphate. DNA-dependent RNA polymerase catalyzes the transcription of DNA into RNA using the four ribonucleoside triphosphates as substrates. This is DNA-directed RNA polymerase subunit beta' from Opitutus terrae (strain DSM 11246 / JCM 15787 / PB90-1).